A 335-amino-acid chain; its full sequence is Legumin type B (335 aa).

2 disordered regions span residues 47–87 (PETQ…GNSV) and 102–155 (TEED…GRNG). Basic and acidic residues predominate over residues 105–118 (DTAKRLRSPRDKRN). A compositionally biased stretch (acidic residues) spans 135-144 (QQEEEEQEEE). The region spanning 167–314 (ENIAQPARAD…AFGLRQRQVT (148 aa)) is the Cupin type-1 domain.

Belongs to the 11S seed storage protein (globulins) family. As to quaternary structure, hexamer; each subunit is composed of an acidic and a basic chain derived from a single precursor and linked by a disulfide bond.

Its function is as follows. This protein found in the seeds of many leguminous and non-leguminous plants is the source of sulfur-containing amino acids in seed meals. The chain is Legumin type B (LEB7) from Vicia faba (Broad bean).